We begin with the raw amino-acid sequence, 161 residues long: MNLSDFKPGEGTEVPEEEKSVSVRTQTRRVALQALYQWQVNHSETVDIIKQFSEEGRLVDTDVALFQEIVNEVANHAADLDELYAPFLDRAVARIDPVEKNIMRMGVFELQNKLEIPYRVVINESVELAKRFGAEDSHKYINGILDKAAEGLRSLEKTQTD.

Positions 1–22 (MNLSDFKPGEGTEVPEEEKSVS) are disordered.

The protein belongs to the NusB family.

In terms of biological role, involved in transcription antitermination. Required for transcription of ribosomal RNA (rRNA) genes. Binds specifically to the boxA antiterminator sequence of the ribosomal RNA (rrn) operons. This chain is Transcription antitermination protein NusB, found in Hydrogenovibrio crunogenus (strain DSM 25203 / XCL-2) (Thiomicrospira crunogena).